A 456-amino-acid chain; its full sequence is MTIESILSAIDSFIWGAPLLILLSGTGLYLTLRLGFIQIRYLPRALGYLFKKDKGGKGDVSSFAALCTALAATIGTGNIVGVATAVQAGGPGAIFWMWLVALLGMATKYAECLLAVKYRVRDKNGFMAGGPMYYIERGLGIRWLAKLFALFGVMVAFFGIGTFPQVNAITHAMQDTFNIPVLVTAIIVTLLVGLIILGGVKRIATASSVIVPFMAILYVTTSLVIILLNIEKVPDAILLIIDSAFDPQAALGGAVGLTVMKAIQSGVARGIFSNESGLGSAPIAAAAAQTREPVRQGLISMTGTFLDTIIVCTMTGIVLVLTGAWNNPELAGATVTNYAFAQGLGTSIGATIVTVGLLFFAFTTILGWCYYGERCFVYLVGIRGVKLYRLAYIMLVGLGAFLHLNLIWIIADIVNGLMAFPNLIALIGLRKVIIEETKDYFQRLKINHYDQDEVIK.

Transmembrane regions (helical) follow at residues 12–32 (SFIW…YLTL), 63–83 (FAAL…VGVA), 86–106 (VQAG…LGMA), 143–163 (WLAK…IGTF), 179–199 (IPVL…ILGG), 208–228 (SVIV…IILL), 237–257 (ILLI…AVGL), 305–325 (FLDT…TGAW), 348–368 (IGAT…ILGW), 390–410 (LAYI…IWII), and 414–434 (VNGL…KVII).

This sequence belongs to the alanine or glycine:cation symporter (AGCS) (TC 2.A.25) family.

Its subcellular location is the cell inner membrane. This is an uncharacterized protein from Haemophilus influenzae (strain ATCC 51907 / DSM 11121 / KW20 / Rd).